The following is a 175-amino-acid chain: MSIDDLKSKIPDFAKDVRLNLSSMASNETLTPQQKYGLFVACGIASRNADVRKALVAEAAGKVDASVIQAAKAAASIMGMNNVYYRFVHLASNKDYRTMPARLRMNVISNPGVDKVDFELWSLAVSAINGCGMCIDAHEDVLRKANVTAEAIQAAVRFASIIQSAAIALEAADTE.

Cysteine 131 functions as the Proton donor in the catalytic mechanism. Cysteine 131 and cysteine 134 are disulfide-bonded. Cysteine 134 serves as the catalytic Cysteine sulfenic acid (-SOH) intermediate.

Belongs to the AhpD family.

It carries out the reaction N(6)-[(R)-dihydrolipoyl]-L-lysyl-[lipoyl-carrier protein] + a hydroperoxide = N(6)-[(R)-lipoyl]-L-lysyl-[lipoyl-carrier protein] + an alcohol + H2O. Its function is as follows. Antioxidant protein with alkyl hydroperoxidase activity. Required for the reduction of the AhpC active site cysteine residues and for the regeneration of the AhpC enzyme activity. In Brucella canis (strain ATCC 23365 / NCTC 10854 / RM-666), this protein is Alkyl hydroperoxide reductase AhpD.